Here is a 388-residue protein sequence, read N- to C-terminus: MTMRIDTDKQMNLLSDKNVAIIGGGPVGLTMAKLLQQNGIDVSVYERDNDREARIFGGTLDLHKGSGQEAMKKAGLLQTYYDLALPMGVNIADEKGNILSTKNVKPENRFDNPEINRNDLRAILLNSLENDTVIWDRKLVMLEPGKKKWTLTFENKPSETADLVILANGGMSKVRKFVTDTEVEETGTFNIQADIHQPEINCPGFFQLCNGNRLMASHQGNLLFANPNNNGALHFGISFKTPDEWKNQTQVDFQNRNSVVDFLLKEFSDWDERYKELIHTTLSFVGLATRIFPLEKPWKSKRPLPITMIGDAAHLMPPFAGQGVNSGLVDALILSDNLADGKFNSIEEAVKNYEQQMFIYGKEAQEESTQNEIEMFKPDFTFQQLLNV.

Residues 26 to 27 (PV) and 45 to 48 (YERD) each bind FAD. Residue Arg54 coordinates NADPH. Positions 61, 117, and 139 each coordinate FAD. 2 residues coordinate substrate: Gln192 and Arg213. Residues Asp311 and 321 to 324 (GQGV) contribute to the FAD site.

It belongs to the aromatic-ring hydroxylase family. TetX subfamily. Monomer. The cofactor is FAD.

It is found in the cytoplasm. The enzyme catalyses a tetracycline + NADPH + O2 + H(+) = an 11a-hydroxytetracycline + NADP(+) + H2O. The catalysed reaction is tetracycline + NADPH + O2 + H(+) = 11a-hydroxytetracycline + NADP(+) + H2O. It catalyses the reaction tigecycline + NADPH + O2 + H(+) = 11a-hydroxytigecycline + NADP(+) + H2O. It carries out the reaction oxytetracycline + NADPH + O2 + H(+) = 11a-hydroxy-oxytetracycline + NADP(+) + H2O. Its activity is regulated as follows. Anhydrotetracycline, a poor substrate, prevents tetracycline degradation in vitro. An FAD-requiring monooxygenase active on tetracycline antibiotic derivatives, which leads to their inactivation. Hydroxylates carbon 11a of oxytetracycline and tigecycline. Acts on many tetracycline analogs (chlorotetracycline, demeclocycline, doxycycline, minocycline, oxytetracyclinee), probably by monooxygenization. Tigecycline, a new generation tetracycline antibiotic, is rendered less effective against E.coli by this monooxygenation, is much weaker at inhibiting translation in vitro and binds Mg(2+) considerably less well. Expression in E.coli BW25113 reduces its growth rate about 5%. The reaction probably proceeds by FAD reduction by NADPH and, second, hydroxylation of antibiotic in a ping-pong mechanism. Degrades chlortetracycline, probably by monooxygenation. Slowly oxidizes anhydrotetracycline, the final substrate in tetracycline biosynthesis. This chain is Flavin-dependent monooxygenase, found in Bacteroides thetaiotaomicron.